We begin with the raw amino-acid sequence, 363 residues long: GDSL esterase/lipase At3g14220 (363 aa).

Positions 1 to 28 are cleaved as a signal peptide; sequence MAKNRNLVFFLGVLASFTLSSFPVTVSG. Serine 39 acts as the Nucleophile in catalysis. Residues aspartate 318 and histidine 321 contribute to the active site.

The protein belongs to the 'GDSL' lipolytic enzyme family.

Its subcellular location is the secreted. This Arabidopsis thaliana (Mouse-ear cress) protein is GDSL esterase/lipase At3g14220.